The following is a 367-amino-acid chain: MSASFTTIAWRNDAVLLLDQQALPGEERYLTCTRFEEVLTAIRDLTVRGAPAIGVASAMGIALGALSLPDDSPEAFCNGFEALCDRFAQARPTARNLFWAVERMKRCFGEHFHPDTSSECSSAAPGKEIARTLAAVRKALVAEARRMAEEDVAINRRIGHYGQVLIRDGYRILTHCNAGALATAGYGTALGVIRAAREAGKQVQVFADETRPVLQGARLTAWELQKENIPVTLITDSMAGFLMKQGRIDCILVGADRIATNGDTANKIGTYTLAVLAAAHSVPLYVAAPLSTIDRKLSSGNEIPIEERPAEEILTIRGVPIAPAGVEVYNPAFDVTPGHYISAIITEAGIAEFPYESSLERLFLSFP.

Substrate contacts are provided by residues 48-50 (RGA), Arg-91, and Gln-215. The Proton donor role is filled by Asp-256. 266–267 (NK) contacts substrate.

This sequence belongs to the eIF-2B alpha/beta/delta subunits family. MtnA subfamily.

The enzyme catalyses 5-(methylsulfanyl)-alpha-D-ribose 1-phosphate = 5-(methylsulfanyl)-D-ribulose 1-phosphate. It functions in the pathway amino-acid biosynthesis; L-methionine biosynthesis via salvage pathway; L-methionine from S-methyl-5-thio-alpha-D-ribose 1-phosphate: step 1/6. Functionally, catalyzes the interconversion of methylthioribose-1-phosphate (MTR-1-P) into methylthioribulose-1-phosphate (MTRu-1-P). This chain is Methylthioribose-1-phosphate isomerase, found in Syntrophus aciditrophicus (strain SB).